The primary structure comprises 158 residues: MSNYDYIEMKVPAKPEYVGVARLTLSGVANRMGFSYESIEDLKVAVSEAITNAVNHAYNDNESGEINIGFGIYEDHIEIMIADRGESFDLEKIKQETGPYHPEEPVEKLREGGFGLFLIEALMDDVKINNQYGVMIMMSKYIAEEEVDMDDDQISTTQ.

It belongs to the anti-sigma-factor family.

The catalysed reaction is L-seryl-[protein] + ATP = O-phospho-L-seryl-[protein] + ADP + H(+). The enzyme catalyses L-threonyl-[protein] + ATP = O-phospho-L-threonyl-[protein] + ADP + H(+). Functionally, negative regulator of sigma-B activity. Phosphorylates and inactivates its specific antagonist protein, RsbV. Upon phosphorylation of RsbV, RsbW is released and binds to sigma-B, thereby blocking its ability to form an RNA polymerase holoenzyme (E-sigma-B). In Oceanobacillus iheyensis (strain DSM 14371 / CIP 107618 / JCM 11309 / KCTC 3954 / HTE831), this protein is Serine-protein kinase RsbW.